Reading from the N-terminus, the 319-residue chain is tRNA uridine(34) hydroxylase (319 aa).

A Rhodanese domain is found at 127 to 221 (KQEDTVIIDA…YGKDPEVQGE (95 aa)). The active-site Cysteine persulfide intermediate is the Cys181.

The protein belongs to the TrhO family.

It catalyses the reaction uridine(34) in tRNA + AH2 + O2 = 5-hydroxyuridine(34) in tRNA + A + H2O. Catalyzes oxygen-dependent 5-hydroxyuridine (ho5U) modification at position 34 in tRNAs. The protein is tRNA uridine(34) hydroxylase of Bacillus cereus (strain B4264).